Reading from the N-terminus, the 637-residue chain is Chaperone protein HtpG (637 aa).

The a; substrate-binding stretch occupies residues 1–345 (MSQQETHGFQ…SNDLPLNVSR (345 aa)). Residues 346-562 (EILQDNHVTK…EGEMSTQMIK (217 aa)) are b. Positions 563–637 (LMQAAGQPVP…MNQMLLANMK (75 aa)) are c.

This sequence belongs to the heat shock protein 90 family. In terms of assembly, homodimer.

The protein resides in the cytoplasm. Its function is as follows. Molecular chaperone. Has ATPase activity. In Shewanella baltica (strain OS185), this protein is Chaperone protein HtpG.